The following is a 251-amino-acid chain: Malonyl-[acyl-carrier protein] O-methyltransferase (251 aa).

Belongs to the methyltransferase superfamily.

The enzyme catalyses malonyl-[ACP] + S-adenosyl-L-methionine = malonyl-[ACP] methyl ester + S-adenosyl-L-homocysteine. The protein operates within cofactor biosynthesis; biotin biosynthesis. Its function is as follows. Converts the free carboxyl group of a malonyl-thioester to its methyl ester by transfer of a methyl group from S-adenosyl-L-methionine (SAM). It allows to synthesize pimeloyl-ACP via the fatty acid synthetic pathway. In Erwinia billingiae (strain Eb661), this protein is Malonyl-[acyl-carrier protein] O-methyltransferase.